We begin with the raw amino-acid sequence, 658 residues long: Endoplasmic reticulum chaperone BiP (658 aa).

The signal sequence occupies residues 1 to 19 (MVTMKLFALVLLVSASVFA). Residues 38 to 41 (GTTY), lysine 98, 228 to 230 (GGT), 294 to 301 (EKAKRALS), and 365 to 368 (GSTR) contribute to the ATP site. The tract at residues 127–281 (KPYIEVDIGD…KKKTGKDVRA (155 aa)) is nucleotide-binding (NBD). The segment at 410 to 420 (QDTGDLVLLDV) is interdomain linker. The tract at residues 421–501 (CPLTLGIETV…PRGVPQIEVT (81 aa)) is substrate-binding (SBD). The segment at 634 to 658 (KLYGGAGAPPPEGAEGAEETEKDEL) is disordered. The segment covering 648–658 (EGAEETEKDEL) has biased composition (acidic residues). The Prevents secretion from ER motif lies at 655–658 (KDEL).

The protein belongs to the heat shock protein 70 family. In terms of assembly, monomer and homooligomer; homooligomerization via the interdomain linker inactivates the chaperone activity and acts as a storage of hspa5/BiP molecules. Interacts with DNAJC10. Interacts with dnajb9/ERdj4; leading to recruit hspa5/BiP to ern1/ire1. Interacts with ern1/ire1; interaction takes place following interaction with dnajb9/ERdj4 and leads to inactivate ern1/IRE1.

It localises to the endoplasmic reticulum lumen. The catalysed reaction is ATP + H2O = ADP + phosphate + H(+). The chaperone activity is regulated by ATP-induced allosteric coupling of the nucleotide-binding (NBD) and substrate-binding (SBD) domains. In the ADP-bound and nucleotide-free (apo) states, the two domains have little interaction. In contrast, in the ATP-bound state the two domains are tightly coupled, which results in drastically accelerated kinetics in both binding and release of polypeptide substrates. J domain-containing co-chaperones (dnajb9/ERdj4 or dnajc10/ERdj5) stimulate the ATPase activity and are required for efficient substrate recognition by hspa5/BiP. Homooligomerization inactivates participating hspa5/BiP protomers and probably act as reservoirs to store hspa5/BiP molecules when they are not needed by the cell. Endoplasmic reticulum chaperone that plays a key role in protein folding and quality control in the endoplasmic reticulum lumen. Involved in the correct folding of proteins and degradation of misfolded proteins via its interaction with dnajc10/ERdj5, probably to facilitate the release of dnajc10/ERdj5 from its substrate. Acts as a key repressor of the EIF2AK3/PERK and ERN1/IRE1-mediated unfolded protein response (UPR). In the unstressed endoplasmic reticulum, recruited by DNAJB9/ERdj4 to the luminal region of ERN1/IRE1, leading to disrupt the dimerization of ERN1/IRE1, thereby inactivating ERN1/IRE1. Also binds and inactivates EIF2AK3/PERK in unstressed cells. Accumulation of misfolded protein in the endoplasmic reticulum causes release of HSPA5/BiP from ERN1/IRE1 and EIF2AK3/PERK, allowing their homodimerization and subsequent activation. The polypeptide is Endoplasmic reticulum chaperone BiP (Xenopus laevis (African clawed frog)).